We begin with the raw amino-acid sequence, 289 residues long: MEAEHTSTKGVPEAGEFLLLDKPLDWTSFDVVAKIRNTYKRGGLKRKVGHSGTLDPKATGLLILATGRKTKEIASLEGLDKEYLAVIKLGARTASHDVETPETDHTPAGHITLAMVRAAALAFVGPRLQQPPMHSASWHEGKRLYALARKGEEVKERKAKEIVIHQFEVTHMQGPLVYCRLLVSKGSYIRVIADELGMALGVGAYLAGLRRTAVGPYRVEDAMSVEDARARILSQIAVDEQQPGGVLAQHEREGSRALDSAAGNAEHDREEARIADNNREDRSRQHADR.

Aspartate 55 acts as the Nucleophile in catalysis. A disordered region spans residues 243–289; that stretch reads PGGVLAQHEREGSRALDSAAGNAEHDREEARIADNNREDRSRQHADR. Basic and acidic residues predominate over residues 265–289; it reads AEHDREEARIADNNREDRSRQHADR.

It belongs to the pseudouridine synthase TruB family. Type 1 subfamily.

It carries out the reaction uridine(55) in tRNA = pseudouridine(55) in tRNA. Functionally, responsible for synthesis of pseudouridine from uracil-55 in the psi GC loop of transfer RNAs. The sequence is that of tRNA pseudouridine synthase B from Chlorobium luteolum (strain DSM 273 / BCRC 81028 / 2530) (Pelodictyon luteolum).